The sequence spans 533 residues: UDP-glucuronosyltransferase 1-2 (533 aa).

The N-terminal stretch at 1-27 is a signal peptide; it reads MDTGLCAPLRGLSGLLLLLCALPWAEG. 4 N-linked (GlcNAc...) asparagine glycosylation sites follow: asparagine 133, asparagine 141, asparagine 295, and asparagine 433. Residues 491–507 form a helical membrane-spanning segment; sequence VIGFLLAIVLTVVFIVY.

This sequence belongs to the UDP-glycosyltransferase family.

The protein resides in the microsome. It localises to the endoplasmic reticulum membrane. The catalysed reaction is glucuronate acceptor + UDP-alpha-D-glucuronate = acceptor beta-D-glucuronoside + UDP + H(+). UDPGT is of major importance in the conjugation and subsequent elimination of potentially toxic xenobiotics and endogenous compounds. This Rattus norvegicus (Rat) protein is UDP-glucuronosyltransferase 1-2 (Ugt1a2).